The following is a 322-amino-acid chain: N-acetyl-gamma-glutamyl-phosphate reductase (322 aa).

Cys-132 is a catalytic residue.

This sequence belongs to the NAGSA dehydrogenase family. Type 1 subfamily.

It is found in the cytoplasm. It carries out the reaction N-acetyl-L-glutamate 5-semialdehyde + phosphate + NADP(+) = N-acetyl-L-glutamyl 5-phosphate + NADPH + H(+). The protein operates within amino-acid biosynthesis; L-arginine biosynthesis; N(2)-acetyl-L-ornithine from L-glutamate: step 3/4. Functionally, catalyzes the NADPH-dependent reduction of N-acetyl-5-glutamyl phosphate to yield N-acetyl-L-glutamate 5-semialdehyde. The protein is N-acetyl-gamma-glutamyl-phosphate reductase of Bacteroides fragilis (strain ATCC 25285 / DSM 2151 / CCUG 4856 / JCM 11019 / LMG 10263 / NCTC 9343 / Onslow / VPI 2553 / EN-2).